Consider the following 181-residue polypeptide: Large ribosomal subunit protein uL6 (181 aa).

Belongs to the universal ribosomal protein uL6 family. Part of the 50S ribosomal subunit.

Functionally, this protein binds to the 23S rRNA, and is important in its secondary structure. It is located near the subunit interface in the base of the L7/L12 stalk, and near the tRNA binding site of the peptidyltransferase center. In Rhodopirellula baltica (strain DSM 10527 / NCIMB 13988 / SH1), this protein is Large ribosomal subunit protein uL6.